The sequence spans 260 residues: Large ribosomal subunit protein uL30 (260 aa).

M1 carries the N-acetylmethionine modification. 5 consecutive repeat copies span residues 7-18, 19-30, 31-42, 43-54, and 55-66. Positions 7–66 are 5 X 12 AA tandem repeats; the sequence is KKKKVAAALGTLKKKKVPAVPETLKKKRRNFAELKVKRLRKKFALKTLRKARRKLIYEKA. Phosphothreonine is present on T29. K136 is subject to N6-acetyllysine. K139 bears the N6-succinyllysine mark. Residue Y151 is modified to Phosphotyrosine.

Belongs to the universal ribosomal protein uL30 family. As to quaternary structure, component of the large ribosomal subunit. Homodimer. Interacts with DHX33.

It is found in the cytoplasm. Component of the large ribosomal subunit. The ribosome is a large ribonucleoprotein complex responsible for the synthesis of proteins in the cell. Binds to G-rich structures in 28S rRNA and in mRNAs. Plays a regulatory role in the translation apparatus; inhibits cell-free translation of mRNAs. In Rattus norvegicus (Rat), this protein is Large ribosomal subunit protein uL30 (Rpl7).